We begin with the raw amino-acid sequence, 173 residues long: Alpha-crystallin A chain (173 aa).

N-acetylmethionine is present on Met1. Residues 1 to 63 (MDIAIQQPWF…RTVLDSGVSE (63 aa)) are required for complex formation with BFSP1 and BFSP2. The residue at position 6 (Gln6) is a Deamidated glutamine; partial. The residue at position 45 (Ser45) is a Phosphoserine. Position 50 is a deamidated glutamine; partial (Gln50). The sHSP domain occupies 52 to 162 (LFRTVLDSGV…GHSERAIPVS (111 aa)). An N6-acetyllysine mark is found at Lys70 and Lys99. His100 is a binding site for Zn(2+). Asn101 carries the post-translational modification Deamidated asparagine; partial. Positions 102 and 107 each coordinate Zn(2+). At Ser122 the chain carries Phosphoserine. Deamidated asparagine; partial is present on Asn123. The tract at residues 144 to 173 (PKVPSGVDAGHSERAIPVSREEKPSSAPSS) is disordered. Positions 153-167 (GHSERAIPVSREEKP) are enriched in basic and acidic residues. A Zn(2+)-binding site is contributed by His154. A glycan (O-linked (GlcNAc) serine) is linked at Ser162.

The protein belongs to the small heat shock protein (HSP20) family. As to quaternary structure, heteromer composed of three CRYAA and one CRYAB subunits. Inter-subunit bridging via zinc ions enhances stability, which is crucial as there is no protein turn over in the lens. Can also form homodimers and homotetramers (dimers of dimers) which serve as the building blocks of homooligomers. Within homooligomers, the zinc-binding motif is created from residues of 3 different molecules. His-100 and Glu-102 from one molecule are ligands of the zinc ion, and His-107 and His-154 residues from additional molecules complete the site with tetrahedral coordination geometry. Part of a complex required for lens intermediate filament formation composed of BFSP1, BFSP2 and CRYAA. In terms of processing, acetylation at Lys-70 may increase chaperone activity. Undergoes age-dependent proteolytical cleavage at the C-terminus.

The protein resides in the cytoplasm. It localises to the nucleus. Functionally, contributes to the transparency and refractive index of the lens. Acts as a chaperone, preventing aggregation of various proteins under a wide range of stress conditions. Required for the correct formation of lens intermediate filaments as part of a complex composed of BFSP1, BFSP2 and CRYAA. The polypeptide is Alpha-crystallin A chain (CRYAA) (Neovison vison (American mink)).